Reading from the N-terminus, the 768-residue chain is UPF0313 protein VV1_2212 (768 aa).

Residues 363–640 form the Radical SAM core domain; the sequence is AYDMIKTSVN…LHKALLRYHD (278 aa). [4Fe-4S] cluster is bound by residues Cys-377, Cys-381, and Cys-384. A disordered region spans residues 674–768; the sequence is DARTPAQRRK…GGRNQPSRAR (95 aa). Basic residues predominate over residues 679–689; sequence AQRRKSGRHGA. The span at 719–731 shows a compositional bias: polar residues; the sequence is GGQSNSAPSRSGS.

Belongs to the UPF0313 family. Requires [4Fe-4S] cluster as cofactor.

This is UPF0313 protein VV1_2212 from Vibrio vulnificus (strain CMCP6).